The chain runs to 137 residues: Fluoride-specific ion channel FluC 1 (137 aa).

Transmembrane regions (helical) follow at residues 4–24, 37–57, 62–82, and 100–120; these read LIYIIVGIAGILGALSRYYLG, LATLLINLVGCFLLAWLTTYI, ILPAEIITGIGTGFIGSFTTF, and IAFLYVSCSILGGLIMSGLGY. 2 residues coordinate Na(+): G77 and T80.

Belongs to the fluoride channel Fluc/FEX (TC 1.A.43) family.

It localises to the cell membrane. It carries out the reaction fluoride(in) = fluoride(out). Its activity is regulated as follows. Na(+) is not transported, but it plays an essential structural role and its presence is essential for fluoride channel function. Fluoride-specific ion channel. Important for reducing fluoride concentration in the cell, thus reducing its toxicity. This Bacillus cereus (strain ATCC 10987 / NRS 248) protein is Fluoride-specific ion channel FluC 1.